A 1394-amino-acid polypeptide reads, in one-letter code: ATP-dependent permease AUS1 (1394 aa).

Topologically, residues 1–420 are cytoplasmic; sequence MSISKYFTPV…PLTTIGSYSR (420 aa). The 241-residue stretch at 33 to 273 folds into the ABC transporter 1 domain; sequence KKSYDAEDSM…FRDTLGIEKD (241 aa). A run of 6 helical transmembrane segments spans residues 421–443, 468–490, 497–519, 529–551, 558–575, and 636–658; these read GSLT…PIAF, TVFD…YFLA, ARFF…LFAL, VANL…VIYL, FVWI…EAIL, and VWRN…LFAS. Over 659–1080 the chain is Cytoplasmic; it reads QYIKPYFNKD…QYICTKRDMT (422 aa). The region spanning 751-978 is the ABC transporter 2 domain; it reads ISWKNINYTV…YFMSHDNTLV (228 aa). 782–789 is a binding site for ATP; the sequence is GESGAGKT. A run of 6 helical transmembrane segments spans residues 1081-1103, 1107-1129, 1156-1178, 1193-1215, 1224-1246, and 1346-1368; these read YVMA…FWHI, IIGL…PLIN, VLLL…LFFV, AGVF…LWLI, AAVF…QPYS, and FGIE…YLTY. The Cytoplasmic portion of the chain corresponds to 1369–1394; the sequence is VARIWPKVFKIITKVIPHRGKKPVQN.

The protein belongs to the ABC transporter superfamily. ABCG family. PDR (TC 3.A.1.205) subfamily.

It localises to the membrane. Functionally, transporter involved in the uptake of sterol. The sequence is that of ATP-dependent permease AUS1 (AUS1) from Saccharomyces cerevisiae (strain ATCC 204508 / S288c) (Baker's yeast).